The following is a 539-amino-acid chain: Glycine betaine transporter 2 (539 aa).

A run of 12 helical transmembrane segments spans residues leucine 44–leucine 64, phenylalanine 85–phenylalanine 105, isoleucine 129–alanine 149, phenylalanine 175–methionine 195, cysteine 231–isoleucine 251, phenylalanine 265–serine 285, isoleucine 299–isoleucine 319, tryptophan 348–isoleucine 368, leucine 380–glycine 400, valine 426–isoleucine 446, phenylalanine 480–isoleucine 500, and leucine 503–leucine 523.

It belongs to the BCCT transporter (TC 2.A.15) family.

The protein resides in the cell inner membrane. Involved in the uptake of the osmoprotectant glycine betaine. The chain is Glycine betaine transporter 2 from Vibrio parahaemolyticus serotype O3:K6 (strain RIMD 2210633).